Consider the following 153-residue polypeptide: Troponin C (153 aa).

EF-hand domains follow at residues 9-44, 45-80, 85-120, and 121-153; these read EQVQ…LGQT, FEEN…FLVE, AMQE…LDDK, and LTED…MTGD. 5 residues coordinate Ca(2+): aspartate 58, aspartate 60, serine 62, glutamate 64, and glutamate 69. Ca(2+) is bound by residues aspartate 134, aspartate 136, serine 138, threonine 140, and glutamate 145.

This sequence belongs to the troponin C family.

Functionally, troponin is the central regulatory protein of striated muscle contraction. Tn consists of three components: Tn-I which is the inhibitor of actomyosin ATPase, Tn-T which contains the binding site for tropomyosin and Tn-C. The binding of calcium to Tn-C abolishes the inhibitory action of Tn on actin filaments. This Tyrophagus putrescentiae (Mold mite) protein is Troponin C.